The following is a 469-amino-acid chain: Repressible acid phosphatase (469 aa).

The first 16 residues, 1–16, serve as a signal peptide directing secretion; sequence MLSILLSLLSLSGTHA. N-linked (GlcNAc...) asparagine glycans are attached at residues Asn-23 and Asn-31. His-77 serves as the catalytic Nucleophile. N-linked (GlcNAc...) asparagine glycosylation is found at Asn-129, Asn-201, Asn-229, Asn-250, and Asn-317. The active-site Proton donor is the Asp-340. 2 N-linked (GlcNAc...) asparagine glycosylation sites follow: Asn-392 and Asn-447.

This sequence belongs to the histidine acid phosphatase family. In terms of processing, glycosylated during secretion across the membrane.

It is found in the secreted. It carries out the reaction a phosphate monoester + H2O = an alcohol + phosphate. The polypeptide is Repressible acid phosphatase (PHO5) (Kluyveromyces lactis (strain ATCC 8585 / CBS 2359 / DSM 70799 / NBRC 1267 / NRRL Y-1140 / WM37) (Yeast)).